The primary structure comprises 247 residues: uncharacterized protein (247 aa).

The next 2 membrane-spanning stretches (helical) occupy residues 11-31 (LIAP…IYCV) and 39-59 (FIAI…TGLL).

Its subcellular location is the cell membrane. This is an uncharacterized protein from Haemophilus influenzae (strain ATCC 51907 / DSM 11121 / KW20 / Rd).